The sequence spans 192 residues: Signal peptidase complex catalytic subunit SEC11C (192 aa).

The Cytoplasmic portion of the chain corresponds to 2 to 28; sequence VRAGAVGTHLPASGLDIFGDLRKMNKR. Residues 29–48 form a helical; Signal-anchor for type II membrane protein membrane-spanning segment; that stretch reads QLYYQVLNFAMIVSSALMIW. Topologically, residues 49–192 are lumenal; that stretch reads KGLIVLTGSE…GAYVLLKRES (144 aa). Active-site charge relay system residues include S68, H108, and D134. Positions 177–188 are C-terminal short (CTS) helix; it reads ALLAVMGAYVLL.

It belongs to the peptidase S26B family. In terms of assembly, component of the signal peptidase complex paralog C (SPC-C) composed of a catalytic subunit SEC11C and three accessory subunits SPCS1, SPCS2 and SPCS3. Within the complex, interacts with SPCS2 and SPCS3. The complex induces a local thinning of the ER membrane which is used to measure the length of the signal peptide (SP) h-region of protein substrates. This ensures the selectivity of the complex towards h-regions shorter than 18-20 amino acids. In terms of processing, may undergo processing at the N-terminus.

Its subcellular location is the endoplasmic reticulum membrane. It carries out the reaction Cleavage of hydrophobic, N-terminal signal or leader sequences from secreted and periplasmic proteins.. Functionally, catalytic component of the signal peptidase complex (SPC) which catalyzes the cleavage of N-terminal signal sequences from nascent proteins as they are translocated into the lumen of the endoplasmic reticulum. Specifically cleaves N-terminal signal peptides that contain a hydrophobic alpha-helix (h-region) shorter than 18-20 amino acids. This Canis lupus familiaris (Dog) protein is Signal peptidase complex catalytic subunit SEC11C (SEC11C).